We begin with the raw amino-acid sequence, 794 residues long: MALISQSIKNLKGGISQQPDILRYPDQGSRQVNGWSSETEGLQKRPPLVFLNTLGDNGALGQAPYIHLINRDEHEQYYAVFTGSGIRVFDLSGNEKQVRYPNGSNYIKTANPRNDLRMVTVADYTFIVNRNVVAQKNTKSVNLPNYNPNQDGLINVRGGQYGRELIVHINGKDVAKYKIPDGSQPEHVNNTDAQWLAEELAKQMRTNLSDWTVNVGQGFIHVTAPSGQQIDSFTTKDGYADQLINPVTHYAQSFSKLPPNAPNGYMVKIVGDASKSADQYYVRYDAERKVWTETLGWNTEDQVLWETMPHALVRAADGNFDFKWLEWSPKSCGDVDTNPWPSFVGSSINDVFFFRNRLGFLSGENIILSRTAKYFNFYPASIANLSDDDPIDVAVSTNRIAILKYAVPFSEELLIWSDEAQFVLTASGTLTSKSVELNLTTQFDVQDRARPFGIGRNVYFASPRSSFTSIHRYYAVQDVSSVKNAEDITSHVPNYIPNGVFSICGSGTENFCSVLSHGDPSKIFMYKFLYLNEELRQQSWSHWDFGENVQVLACQSISSDMYVILRNEFNTFLARISFTKNAIDLQGEPYRAFMDMKIRYTIPSGTYNDDTFTTSIHIPTIYGANFGRGKITVLEPDGKITVFEQPTAGWNSDPWLRLSGNLEGRMVYIGFNINFVYEFSKFLIKQTADDGSTSTEDIGRLQLRRAWVNYENSGTFDIYVENQSSNWKYTMAGARLGSNTLRAGRLNLGTGQYRFPVVGNAKFNTVYILSDETTPLNIIGCGWEGNYLRRSSGI.

As to quaternary structure, interacts with head-to-tail connector protein gp8, the tail component gp11, and the fiber protein gp17.

The protein localises to the virion. In terms of biological role, structural component of the short non-contractile tail. The tail complex is involved in viral genome delivery. Forms the end of the tail, including the canonical tube, the nozzle, and the small extensions below the fibers. Once the tail tubular structure is formed, the interface between gp11 and gp12 generates the proper environment to interact with the six gp17 trimers. The chain is Tail tubular protein gp12 from Escherichia coli (Bacteriophage T7).